The chain runs to 347 residues: MVEKEEAVISEEEAAQYDRQIRLWGLEAQKRLRTSRVLLVGMRGLGAEVAKNLILAGVKALTLLDHEQVSSEDSRAQFLIPSGSLGQNRAEASLNRARNLNPMVSVEADTENINQKSDDFFTQFDVVCLTSCSRDLLVRVDHICHKHNIKFFTGDVFGYHGYMFADLGEHEFVEEKAKVAKVSKAKQEVEDGPEAKKAKIDPTESILVKKKVQFCPLKDALEIDWHSEKAKSALKKTPTDFFLLQVLMKFRTDKKRDPQPSNYQEDSELLLQICSDVLDSLGVSPDLLPKDFASYCFSEMAPVCAVVGGVLGQEIVKALSQRDAPHNNFFFFDGRSSNGIVDCLGSK.

This sequence belongs to the ubiquitin-activating E1 family. Heterodimer of sae1 and uba2/sae2. The heterodimer corresponds to the two domains that are encoded on a single polypeptide chain in ubiquitin-activating enzyme E1. Interacts with ube2i.

Its subcellular location is the nucleus. It functions in the pathway protein modification; protein sumoylation. In terms of biological role, the heterodimer acts as an E1 ligase for sumo1, sumo2, and sumo3. It mediates ATP-dependent activation of sumo proteins followed by formation of a thioester bond between a sumo protein and a conserved active site cysteine residue on uba2/sae2. The chain is SUMO-activating enzyme subunit 1 (sae1) from Xenopus tropicalis (Western clawed frog).